Reading from the N-terminus, the 2604-residue chain is BEACH domain-containing protein B (2604 aa).

The 152-residue stretch at 1761–1912 (VGTSEVLTSV…NAKEVGMLIV (152 aa)) folds into the BEACH-type PH domain. The 291-residue stretch at 1936–2226 (DRRIAMEMAE…QIFRKKHPRR (291 aa)) folds into the BEACH domain. WD repeat units follow at residues 2254–2293 (HSPS…SGGN), 2368–2407 (HHKD…TPEK), 2433–2474 (GHDD…RSLK), 2476–2515 (PSGS…LASS), 2516–2557 (ESNG…KRYN), and 2558–2596 (GAGK…HRKP).

May be involved in the suppression of BCHC1 activity. The polypeptide is BEACH domain-containing protein B (Arabidopsis thaliana (Mouse-ear cress)).